Here is a 365-residue protein sequence, read N- to C-terminus: DNA replication and repair protein RecF (365 aa).

G30 to T37 is a binding site for ATP.

It belongs to the RecF family.

It is found in the cytoplasm. The RecF protein is involved in DNA metabolism; it is required for DNA replication and normal SOS inducibility. RecF binds preferentially to single-stranded, linear DNA. It also seems to bind ATP. This Chlamydia trachomatis serovar L2b (strain UCH-1/proctitis) protein is DNA replication and repair protein RecF.